The chain runs to 200 residues: Prostamide/prostaglandin F synthase (200 aa).

The protein belongs to the peroxiredoxin-like PRXL2 family. Prostamide/prostaglandin F synthase subfamily.

It localises to the cytoplasm. It is found in the cytosol. It catalyses the reaction prostaglandin H2 + [thioredoxin]-dithiol = prostaglandin F2alpha + [thioredoxin]-disulfide. The enzyme catalyses prostamide F2alpha + [thioredoxin]-disulfide = prostamide H2 + [thioredoxin]-dithiol. In terms of biological role, catalyzes the reduction of prostaglandin-ethanolamide H(2) (prostamide H(2)) to prostamide F(2alpha) with NADPH as proton donor. Also able to reduce prostaglandin H(2) to prostaglandin F(2alpha). In Salmo salar (Atlantic salmon), this protein is Prostamide/prostaglandin F synthase (prxl2b).